The sequence spans 297 residues: Alpha-tubulin N-acetyltransferase 1 (297 aa).

An N-acetyltransferase domain is found at 1-186 (MEFDFDVHKI…NNFVVFDGFF (186 aa)). Residues 120–133 (FYIH…GFGK) and 156–165 (SEKFLSFLRK) contribute to the acetyl-CoA site. Residues 269–297 (LHRTANSEQEDHSQRRRTSSLNRPQSIHH) are disordered. The segment covering 287-297 (SSLNRPQSIHH) has biased composition (polar residues).

It belongs to the acetyltransferase ATAT1 family.

The protein localises to the cytoplasm. The protein resides in the membrane. It is found in the clathrin-coated pit. Its subcellular location is the cell junction. It localises to the focal adhesion. The protein localises to the cell projection. The protein resides in the axon. It is found in the cytoskeleton. Its subcellular location is the spindle. It catalyses the reaction L-lysyl-[alpha-tubulin] + acetyl-CoA = N(6)-acetyl-L-lysyl-[alpha-tubulin] + CoA + H(+). Specifically acetylates 'Lys-40' in alpha-tubulin on the lumenal side of microtubules. Promotes microtubule destabilization and accelerates microtubule dynamics; this activity may be independent of acetylation activity. Acetylates alpha-tubulin with a slow enzymatic rate, due to a catalytic site that is not optimized for acetyl transfer. Enters the microtubule through each end and diffuses quickly throughout the lumen of microtubules. Acetylates only long/old microtubules because of its slow acetylation rate since it does not have time to act on dynamically unstable microtubules before the enzyme is released. May be involved in neuron development. The protein is Alpha-tubulin N-acetyltransferase 1 of Xenopus tropicalis (Western clawed frog).